We begin with the raw amino-acid sequence, 73 residues long: Disintegrin lutosin (73 aa).

The Disintegrin domain occupies 1–73 (EAGEECDCGS…ADCPRNGLYG (73 aa)). Intrachain disulfides connect C6–C21, C8–C16, C15–C38, C29–C35, C34–C59, and C47–C66. Residues 51–53 (RGD) carry the Cell attachment site motif.

The protein belongs to the venom metalloproteinase (M12B) family. P-II subfamily. P-IIa sub-subfamily. In terms of assembly, monomer (disintegrin). Expressed by the venom gland.

The protein resides in the secreted. Functionally, inhibits fibrinogen interaction with platelets. Acts by binding to alpha-IIb/beta-3 (ITGA2B/ITGB3) on the platelet surface and inhibits aggregation induced by ADP, thrombin, platelet-activating factor and collagen. The polypeptide is Disintegrin lutosin (Crotalus lutosus (Great basin rattlesnake)).